A 307-amino-acid chain; its full sequence is DDRGK domain-containing protein 1 (307 aa).

Over 1 to 2 (MD) the chain is Lumenal. Residues 3–23 (LILLVGIATALLLILITLYFL) traverse the membrane as a helical segment. The Cytoplasmic segment spans residues 24–307 (QSKNAKTETK…TPVAAGESSA (284 aa)). The tract at residues 31-175 (ETKAAAQPQR…EADRLAKEER (145 aa)) is disordered. Over residues 52 to 83 (RRAQIARNQRNRLRQNQNAPAVAAAAAPAAAV) the composition is skewed to low complexity. The segment covering 107-175 (LDEKMGAKKR…EADRLAKEER (69 aa)) has biased composition (basic and acidic residues).

It belongs to the DDRGK1 family. In terms of assembly, interacts with Atg9; the interaction is transient.

The protein resides in the endoplasmic reticulum membrane. Its function is as follows. Substrate adapter for ufmylation, the covalent attachment of the ubiquitin-like modifier UFM1 to substrate proteins. Required for ufmylation of Atg9; protects the nervous system during aging, possibly by stabilizing Atg9 and supporting its function. In Drosophila virilis (Fruit fly), this protein is DDRGK domain-containing protein 1.